Reading from the N-terminus, the 425-residue chain is tRNA(Ile)-lysidine synthase (425 aa).

Position 27 to 32 (27 to 32 (SGGLDS)) interacts with ATP.

Belongs to the tRNA(Ile)-lysidine synthase family.

The protein resides in the cytoplasm. The enzyme catalyses cytidine(34) in tRNA(Ile2) + L-lysine + ATP = lysidine(34) in tRNA(Ile2) + AMP + diphosphate + H(+). Functionally, ligates lysine onto the cytidine present at position 34 of the AUA codon-specific tRNA(Ile) that contains the anticodon CAU, in an ATP-dependent manner. Cytidine is converted to lysidine, thus changing the amino acid specificity of the tRNA from methionine to isoleucine. This is tRNA(Ile)-lysidine synthase from Streptococcus pneumoniae (strain JJA).